Reading from the N-terminus, the 114-residue chain is Mobility group protein 1A (114 aa).

A DNA-binding region (HMG box) is located at residues Pro-5–Glu-71. The tract at residues Glu-69–Asp-114 is disordered. The span at Glu-105–Asp-114 shows a compositional bias: acidic residues.

This sequence belongs to the HMGB family.

The protein resides in the nucleus. It is found in the chromosome. In terms of biological role, found in condensed chromomeres. Binds preferentially to AT-rich DNA. The protein is Mobility group protein 1A (HMG1A) of Chironomus tentans (Midge).